We begin with the raw amino-acid sequence, 188 residues long: dTTP/UTP pyrophosphatase (188 aa).

Catalysis depends on Asp-70, which acts as the Proton acceptor.

The protein belongs to the Maf family. YhdE subfamily. The cofactor is a divalent metal cation.

It is found in the cytoplasm. It carries out the reaction dTTP + H2O = dTMP + diphosphate + H(+). The catalysed reaction is UTP + H2O = UMP + diphosphate + H(+). In terms of biological role, nucleoside triphosphate pyrophosphatase that hydrolyzes dTTP and UTP. May have a dual role in cell division arrest and in preventing the incorporation of modified nucleotides into cellular nucleic acids. In Clostridium botulinum (strain Alaska E43 / Type E3), this protein is dTTP/UTP pyrophosphatase.